The primary structure comprises 470 residues: Uronate isomerase (470 aa).

It belongs to the metallo-dependent hydrolases superfamily. Uronate isomerase family.

It catalyses the reaction D-glucuronate = D-fructuronate. The enzyme catalyses aldehydo-D-galacturonate = keto-D-tagaturonate. It participates in carbohydrate metabolism; pentose and glucuronate interconversion. This is Uronate isomerase from Escherichia coli O157:H7 (strain EC4115 / EHEC).